The following is a 428-amino-acid chain: Flotillin-2 (428 aa).

Residues Cys4, Cys19, and Cys20 are each lipidated (S-palmitoyl cysteine).

The protein belongs to the band 7/mec-2 family. Flotillin subfamily. Heterooligomeric complex of flotillins 1 and 2. Palmitoylation may be required for the formation of higher order complexes and for neurite outgrowth in cultured neural stem cells. In terms of tissue distribution, normally expressed in growing retinal exons of newly differentiated ganglion cells at the retinal margin. After optic nerve injury, expressed in all retinal ganglion cells and retinal axons. Also expressed in endothelial cells, spinal cord, larval and adult skin, muscle processes, thymus and gill macrophages.

It localises to the membrane. The protein localises to the endosome. Its function is as follows. May play a role in axon growth and regeneration. May be involved in epidermal cell adhesion and epidermal structure and function. This Carassius auratus (Goldfish) protein is Flotillin-2 (flot2).